The following is a 1070-amino-acid chain: Isoleucine--tRNA ligase (1070 aa).

A 'HIGH' region motif is present at residues 50–60; sequence PYTSGAAHMGT. The 'KMSKS' region signature appears at 606 to 610; sequence GMSKS. Lys-609 lines the ATP pocket.

The protein belongs to the class-I aminoacyl-tRNA synthetase family. IleS type 2 subfamily. As to quaternary structure, monomer. Requires Zn(2+) as cofactor.

It localises to the cytoplasm. The catalysed reaction is tRNA(Ile) + L-isoleucine + ATP = L-isoleucyl-tRNA(Ile) + AMP + diphosphate. In terms of biological role, catalyzes the attachment of isoleucine to tRNA(Ile). As IleRS can inadvertently accommodate and process structurally similar amino acids such as valine, to avoid such errors it has two additional distinct tRNA(Ile)-dependent editing activities. One activity is designated as 'pretransfer' editing and involves the hydrolysis of activated Val-AMP. The other activity is designated 'posttransfer' editing and involves deacylation of mischarged Val-tRNA(Ile). The sequence is that of Isoleucine--tRNA ligase from Halobacterium salinarum (strain ATCC 700922 / JCM 11081 / NRC-1) (Halobacterium halobium).